We begin with the raw amino-acid sequence, 258 residues long: Phosphosulfolactate synthase (258 aa).

It belongs to the phosphosulfolactate synthase family.

The catalysed reaction is (2R)-O-phospho-3-sulfolactate = phosphoenolpyruvate + sulfite + H(+). Its pathway is cofactor biosynthesis; coenzyme M biosynthesis; sulfoacetaldehyde from phosphoenolpyruvate and sulfite: step 1/4. In terms of biological role, catalyzes the addition of sulfite to phosphoenolpyruvate (PEP) to yield (2R)-phospho-3-sulfolactate (PSL). In Methanothermobacter thermautotrophicus (strain ATCC 29096 / DSM 1053 / JCM 10044 / NBRC 100330 / Delta H) (Methanobacterium thermoautotrophicum), this protein is Phosphosulfolactate synthase (comA).